We begin with the raw amino-acid sequence, 116 residues long: HTH-type transcriptional regulator SarV (116 aa).

Residues 51 to 74 (RDTLHFEMLWDTSKIDVIIRKIYK) constitute a DNA-binding region (H-T-H motif).

It belongs to the SarA family.

The protein resides in the cytoplasm. Part of the pathway by which MgrA and SarA control autolysis. The polypeptide is HTH-type transcriptional regulator SarV (sarV) (Staphylococcus aureus (strain Mu50 / ATCC 700699)).